We begin with the raw amino-acid sequence, 92 residues long: DNA-binding protein HU-alpha (92 aa).

The protein belongs to the bacterial histone-like protein family. Heterodimer of an alpha and a beta chain.

Histone-like DNA-binding protein which is capable of wrapping DNA to stabilize it, and thus to prevent its denaturation under extreme environmental conditions. The protein is DNA-binding protein HU-alpha (hupA) of Burkholderia pseudomallei (strain K96243).